Here is a 133-residue protein sequence, read N- to C-terminus: UPF0102 protein Anae109_1947 (133 aa).

The protein belongs to the UPF0102 family.

The protein is UPF0102 protein Anae109_1947 of Anaeromyxobacter sp. (strain Fw109-5).